A 233-amino-acid chain; its full sequence is ATP-dependent Clp protease proteolytic subunit 2 (233 aa).

The Nucleophile role is filled by Ser-116. His-141 is an active-site residue. A disordered region spans residues 214–233; the sequence is EGLKSIQPNGEAADDSEDDA.

The protein belongs to the peptidase S14 family. In terms of assembly, fourteen ClpP subunits assemble into 2 heptameric rings which stack back to back to give a disk-like structure with a central cavity, resembling the structure of eukaryotic proteasomes.

The protein resides in the cytoplasm. It carries out the reaction Hydrolysis of proteins to small peptides in the presence of ATP and magnesium. alpha-casein is the usual test substrate. In the absence of ATP, only oligopeptides shorter than five residues are hydrolyzed (such as succinyl-Leu-Tyr-|-NHMec, and Leu-Tyr-Leu-|-Tyr-Trp, in which cleavage of the -Tyr-|-Leu- and -Tyr-|-Trp bonds also occurs).. Its function is as follows. Cleaves peptides in various proteins in a process that requires ATP hydrolysis. Has a chymotrypsin-like activity. Plays a major role in the degradation of misfolded proteins. The sequence is that of ATP-dependent Clp protease proteolytic subunit 2 from Salinibacter ruber (strain DSM 13855 / M31).